Consider the following 250-residue polypeptide: 1-(5-phosphoribosyl)-5-[(5-phosphoribosylamino)methylideneamino] imidazole-4-carboxamide isomerase (250 aa).

The active-site Proton acceptor is the aspartate 12. The active-site Proton donor is the aspartate 133.

The protein belongs to the HisA/HisF family.

The protein resides in the cytoplasm. It carries out the reaction 1-(5-phospho-beta-D-ribosyl)-5-[(5-phospho-beta-D-ribosylamino)methylideneamino]imidazole-4-carboxamide = 5-[(5-phospho-1-deoxy-D-ribulos-1-ylimino)methylamino]-1-(5-phospho-beta-D-ribosyl)imidazole-4-carboxamide. The protein operates within amino-acid biosynthesis; L-histidine biosynthesis; L-histidine from 5-phospho-alpha-D-ribose 1-diphosphate: step 4/9. This Zymomonas mobilis subsp. mobilis (strain ATCC 31821 / ZM4 / CP4) protein is 1-(5-phosphoribosyl)-5-[(5-phosphoribosylamino)methylideneamino] imidazole-4-carboxamide isomerase.